Reading from the N-terminus, the 159-residue chain is Ribosomal RNA large subunit methyltransferase H (159 aa).

Residues L76, G108, and 127 to 132 (FSKMTF) each bind S-adenosyl-L-methionine.

The protein belongs to the RNA methyltransferase RlmH family. Homodimer.

It is found in the cytoplasm. It carries out the reaction pseudouridine(1915) in 23S rRNA + S-adenosyl-L-methionine = N(3)-methylpseudouridine(1915) in 23S rRNA + S-adenosyl-L-homocysteine + H(+). In terms of biological role, specifically methylates the pseudouridine at position 1915 (m3Psi1915) in 23S rRNA. This is Ribosomal RNA large subunit methyltransferase H from Oceanobacillus iheyensis (strain DSM 14371 / CIP 107618 / JCM 11309 / KCTC 3954 / HTE831).